The following is a 241-amino-acid chain: Phosducin-like protein 2 (241 aa).

The region spanning 34 to 202 is the Phosducin domain; it reads VLRLQKEAMV…EWKLAEVGAI (169 aa). The interval 89-241 is thioredoxin fold; it reads FGELREISGN…DSSNSDNDTK (153 aa).

This sequence belongs to the phosducin family. As to quaternary structure, interacts with the CCT chaperonin complex and actin. In terms of tissue distribution, testis-specific.

The protein localises to the endoplasmic reticulum. Essential for male fertility, spermiogenesis and acrosome formation. This chain is Phosducin-like protein 2 (PDCL2), found in Homo sapiens (Human).